The primary structure comprises 35 residues: Delta-theraphotoxin-Hm1a (35 aa).

3 disulfide bridges follow: Cys2-Cys16, Cys9-Cys21, and Cys15-Cys28.

This sequence belongs to the neurotoxin 10 (Hwtx-1) family. 09 (HaTx) subfamily. As to expression, expressed by the venom gland.

The protein localises to the secreted. Gating-modifier toxin that potently inhibits inactivation of the mammalian Nav1.1/SCN1A sodium channel (EC(50)=38 nM). Also moderately inhibits inactivation of Nav1.2/SCN2A (EC(50)=236 nM) and Nav1.3/SCN3A (EC(50)=220 nM) when the channels are expressed in oocytes without the beta-1 auxiliary subunit. Does not inhibit inactivation of Nav1.2/SCN2A when the channel is coexpressed with the beta-1 auxiliary subunit. When tested on Nav1.1/SCN1A channel, it enhances peak current amplitude and potently delays channel inactivation in a dose-dependent manner, leading to a large sustained current. It has no effect on the voltage-dependence of steady-state activation, and induces a depolarizing shift in the voltage dependence of inactivation. In addition, it does not modify the recovery from fast inactivation in Nav1.1/SCN1A. The binding affinity and subtype selectivity of the toxin towards Nav1.1/SCN1A channel is determined by residues within both the S1-S2 and S3-S4 loops of the domain IV voltage sensor of the channel. This toxin also weakly inhibits several subtypes of voltage-gated potassium channels. It moderately blocks Kv2.1/KCNB1 (23% inhibition at 100 nM), Kv2.2/KCNB2 (19.7% at 100 nM and 51% at 300 nM), Kv4.1/KCND1 (IC(50)=280 nM), Kv4.2/KCND2 (39% at 300 nM) and Kv4.3/KCND3 (43% at 300 nM). In vivo, intracerebroventricular injection into mice elicits convulsions, spasms, tremors and rapid death. When injected into mouse hindpaw, the toxin elicits an immediate and robust response to pain. However, intraplantar injection of toxin does not cause neurogenic inflammation or alter sensitivity to heat, indicative of a modality-specific effect on mechanosensitive neurons. In Dravet syndrome mice model, intracerebroventricular infusion of this peptide rescues mice from seizures and premature death. In Heteroscodra maculata (Togo starburst tarantula), this protein is Delta-theraphotoxin-Hm1a.